We begin with the raw amino-acid sequence, 695 residues long: MHLKLYWKLQKKERPLEVSRDTLRTPMSHGKANGDVKARASYMKPTVLPSASLVKASSRKPFGILSPNVLCSMSGKSPVENSLNVKAKKNVLSAAVHQSEEGLPGTWAIVKPGNTKEKIAFFAAHQYSNRIGSMKIKSSWDIDGRATKRRKKSGDLKKAKLQLEMMREINSQCYQSEPFVCGVEHCSVHYMSDSGDGVCAARPLSVIQMVAFLEQKATALLASCTKNCTNSPAIVKISGQSRGIPPAPEPFSAPETCEEPKEQENPETGRSQGEPVRVLDMVARLESECLKHQGQREPGSLSRNNSFRRNVGRVLLTNGSQASDKSEEGSADTADPQENPLQPVSVGEEPSVTEHHSVGEQAWDGTSQSCPSLPATVSFHMDSTDLEPGQQTAMKSCSRDDVEMVEEFDELPTDAVRRIRRELVTVTKHSPEQRQDPLCISITVCTVEKDRPAALDSLEEPLPGMLFFLSSGQDQQAHPQLREHPAPEASEASQPQDAAEGSSAGEEKDASVEPLLPAASPGGSTSQVLEAATCKKQVSQDFLETRFKIQQLLEPQQYMACLPHHIIVKIFRLLPTLSLAILKCTCRYFKSIIEYYNIRPADSRWVRDPRYREDPCKQCKKKYVKGDVSLCRWHPKPYCQALPYGPGYWMCCHQSQKGFPGCKLGLHDNHWLPACHSFNRAIHKKTRGSETEEEY.

Disordered regions lie at residues 239 to 275, 316 to 373, and 472 to 524; these read GQSRGIPPAPEPFSAPETCEEPKEQENPETGRSQGEP, LTNG…CPSL, and GQDQ…PGGS. An F-box domain is found at 556 to 608; it reads QQYMACLPHHIIVKIFRLLPTLSLAILKCTCRYFKSIIEYYNIRPADSRWVRD.

As to quaternary structure, directly interacts with SKP1 and CUL1.

Substrate-recognition component of the SCF (SKP1-CUL1-F-box protein)-type E3 ubiquitin ligase complex. The protein is F-box only protein 34 (Fbxo34) of Mus musculus (Mouse).